Here is a 193-residue protein sequence, read N- to C-terminus: Large ribosomal subunit protein bL12cy (193 aa).

Residues Met1–Ser59 constitute a chloroplast transit peptide. Basic and acidic residues predominate over residues Gly170 to Gly187. The interval Gly170–Val193 is disordered.

This sequence belongs to the bacterial ribosomal protein bL12 family.

It localises to the plastid. Its subcellular location is the chloroplast. In Arabidopsis thaliana (Mouse-ear cress), this protein is Large ribosomal subunit protein bL12cy (RPL12B).